Reading from the N-terminus, the 399-residue chain is Serine/threonine-protein kinase PknL (399 aa).

The Cytoplasmic portion of the chain corresponds to 1–368 (MVEAGTRDPL…FIWARQHARR (368 aa)). A Protein kinase domain is found at 19–278 (YLVQAKIASG…IAMGADLEAI (260 aa)). ATP is bound by residues 25–33 (IASGGTSTV) and K48. Residue D142 is the Proton acceptor of the active site. Residues 312-346 (GQLGAKPVHHPTRQLTRQPGDCSEPASGSEPEHEP) form a disordered region. A helical transmembrane segment spans residues 369–389 (MVLVWVSVVLAITGLVASAAW). Residues 390 to 399 (TIGSNLSGLL) lie on the Extracellular side of the membrane.

Belongs to the protein kinase superfamily. Ser/Thr protein kinase family. Autophosphorylated.

The protein localises to the cell membrane. It carries out the reaction L-seryl-[protein] + ATP = O-phospho-L-seryl-[protein] + ADP + H(+). The catalysed reaction is L-threonyl-[protein] + ATP = O-phospho-L-threonyl-[protein] + ADP + H(+). In Mycobacterium bovis (strain ATCC BAA-935 / AF2122/97), this protein is Serine/threonine-protein kinase PknL (pknL).